The primary structure comprises 1231 residues: Multifunctional 2-oxoglutarate metabolism enzyme (1231 aa).

Residues 1–41 are 2-oxoglutarate dehydrogenase E1, N-terminal part; it reads MANISSPFGQNEWLVEEMYRKFRDDPSSVDPSWHEFLVDYS. The tract at residues 38 to 79 is disordered; sequence VDYSPEPTSQPAAEPTRVTSPLVAERAAAAAPQAPPKPADTA. The segment at 42 to 88 is linker; that stretch reads PEPTSQPAAEPTRVTSPLVAERAAAAAPQAPPKPADTAAAGNGVVAA. A compositionally biased stretch (low complexity) spans 58 to 69; the sequence is PLVAERAAAAAP. Residues 89-337 form a succinyltransferase E2 region; that stretch reads LAAKTAVPPP…LRTIHELLLS (249 aa). Residue H316 is the Proton acceptor; for succinyltransferase activity of the active site. Positions 338 to 1231 are 2-oxoglutarate dehydrogenase E1, C-terminal part; that stretch reads DGFWDEVFRE…QQEILDEAFG (894 aa). R542 serves as a coordination point for thiamine diphosphate. 2-oxoglutarate-binding residues include H581 and S606. Positions 606, 608, 649, 650, 651, and 682 each coordinate thiamine diphosphate. Position 649 (D649) interacts with Mg(2+). Mg(2+) contacts are provided by N682 and I684. Residues 787-817 adopt a coiled-coil conformation; that stretch reads DISMKEAEDALRDYQGQLERVFNEVRELEKH. Residue H1024 coordinates 2-oxoglutarate. The acetyl-CoA site is built by T1042, R1058, K1093, S1096, Q1146, R1153, and R1154.

This sequence belongs to the 2-oxoacid dehydrogenase family. Kgd subfamily. Homodimer. The 2-oxoglutarate dehydrogenase (ODH) complex contains multiple copies of three enzymatic components: 2-oxoglutarate dehydrogenase (E1), dihydrolipoamide succinyltransferase (E2) and lipoamide dehydrogenase (E3). Requires Mg(2+) as cofactor. It depends on thiamine diphosphate as a cofactor.

It carries out the reaction glyoxylate + 2-oxoglutarate + H(+) = 2-hydroxy-3-oxoadipate + CO2. It catalyses the reaction 2-oxoglutarate + H(+) = succinate semialdehyde + CO2. The enzyme catalyses N(6)-[(R)-lipoyl]-L-lysyl-[protein] + 2-oxoglutarate + H(+) = N(6)-[(R)-S(8)-succinyldihydrolipoyl]-L-lysyl-[protein] + CO2. The catalysed reaction is N(6)-[(R)-dihydrolipoyl]-L-lysyl-[protein] + succinyl-CoA = N(6)-[(R)-S(8)-succinyldihydrolipoyl]-L-lysyl-[protein] + CoA. It functions in the pathway carbohydrate metabolism; tricarboxylic acid cycle; succinate from 2-oxoglutarate (transferase route): step 1/2. The protein operates within carbohydrate metabolism; tricarboxylic acid cycle; succinyl-CoA from 2-oxoglutarate (dehydrogenase route): step 1/1. Alpha-ketoglutarate dehydrogenase and decarboxylase activities are inhibited by unphosphorylated GarA, and allosterically activated by acetyl-CoA, the main substrate of the TCA cycle. Its function is as follows. Shows three enzymatic activities that share a first common step, the attack of thiamine-PP on 2-oxoglutarate (alpha-ketoglutarate, KG), leading to the formation of an enamine-thiamine-PP intermediate upon decarboxylation. Thus, displays KGD activity, catalyzing the decarboxylation from five-carbon 2-oxoglutarate to four-carbon succinate semialdehyde (SSA). Also catalyzes C-C bond formation between the activated aldehyde formed after decarboxylation of alpha-ketoglutarate and the carbonyl of glyoxylate (GLX), to yield 2-hydroxy-3-oxoadipate (HOA), which spontaneously decarboxylates to form 5-hydroxylevulinate (HLA). And is also a component of the 2-oxoglutarate dehydrogenase (ODH) complex, that catalyzes the overall conversion of 2-oxoglutarate to succinyl-CoA and CO(2). The KG decarboxylase and KG dehydrogenase reactions provide two alternative, tightly regulated, pathways connecting the oxidative and reductive branches of the TCA cycle. The protein is Multifunctional 2-oxoglutarate metabolism enzyme (kgd) of Mycobacterium tuberculosis (strain ATCC 25177 / H37Ra).